The following is a 147-amino-acid chain: Protein BUD31 homolog (147 aa).

Residues 8-12 (RRVRK) carry the Nuclear localization signal motif.

The protein belongs to the BUD31 (G10) family. In terms of assembly, identified in the spliceosome C complex.

The protein resides in the nucleus. In terms of biological role, involved in pre-mRNA splicing process. The protein is Protein BUD31 homolog of Caenorhabditis elegans.